The chain runs to 361 residues: MKKNLMLIFGGVSFEHEISCKSAYSIYLALLDLNKYNIYPVYIDKCTGVWYLLDSVSDPPKPINTDVLPIVSLLPGFGIFSNNKNLEIDVVFPVVHGRTGEDGAIQGVLKVMDIPCVGAGIIGSAISSNKYFCKLLLKSFDIPLVPFIGFRQHDYFLDKEEIKRNVKEVLGYPVIVKPAVLGSSIGINVAYSENQIESFIKEALKYDLTIVIEKFIEAREIECSIIGNEKMKIFSPGEVVVQDFIFYDYDAKYSVIPGNSIIFNIPAHLETNQLLSIKEYAFLTYKNLELRGMARVDFFVEKKSGTIYLNEINTIPGFTDISMFAKMCSNDGLQFKDLVDNLIDYAFQSYINRKKRIDFEN.

Residues 134–344 (KLLLKSFDIP…FKDLVDNLID (211 aa)) form the ATP-grasp domain. Position 167 to 222 (167 to 222 (KEVLGYPVIVKPAVLGSSIGINVAYSENQIESFIKEALKYDLTIVIEKFIEAREIE)) interacts with ATP. Positions 297, 311, and 313 each coordinate Mg(2+).

Belongs to the D-alanine--D-alanine ligase family. Mg(2+) serves as cofactor. Requires Mn(2+) as cofactor.

The protein resides in the cytoplasm. It carries out the reaction 2 D-alanine + ATP = D-alanyl-D-alanine + ADP + phosphate + H(+). It participates in cell wall biogenesis; peptidoglycan biosynthesis. In terms of biological role, cell wall formation. In Borreliella burgdorferi (strain ATCC 35210 / DSM 4680 / CIP 102532 / B31) (Borrelia burgdorferi), this protein is D-alanine--D-alanine ligase.